Reading from the N-terminus, the 112-residue chain is Glutaredoxin-C6 (112 aa).

Positions 3–103 constitute a Glutaredoxin domain; it reads LAKAKETVAS…PLLTEAGAIA (101 aa). Cys-23 and Cys-26 are disulfide-bonded.

It belongs to the glutaredoxin family. CPYC subfamily. The N-terminus is blocked. Expressed in aleurone layer.

The protein resides in the cytoplasm. Its function is as follows. Has a glutathione-disulfide oxidoreductase activity in the presence of NADPH and glutathione reductase. Reduces low molecular weight disulfides and proteins. Possesses thioltransferase, dehydroascorbate reductase and GSH-dependent peroxidase activities in vitro. This is Glutaredoxin-C6 (GRXC6) from Oryza sativa subsp. japonica (Rice).